A 371-amino-acid chain; its full sequence is Putative transport protein YtvI (371 aa).

A run of 9 helical transmembrane segments spans residues 6 to 26, 30 to 50, 65 to 85, 168 to 188, 225 to 245, 256 to 276, 283 to 303, 312 to 332, and 334 to 354; these read ITIF…IAAA, FPLT…HPVV, VLGV…ILVA, FFAL…ATFF, GFIK…FIGL, IAFL…SVFV, SITG…VVLI, ILSK…FAGF, and LFGF…QAFI.

It belongs to the autoinducer-2 exporter (AI-2E) (TC 2.A.86) family.

Its subcellular location is the cell membrane. The sequence is that of Putative transport protein YtvI (ytvI) from Bacillus subtilis (strain 168).